The sequence spans 91 residues: uncharacterized protein (91 aa).

This is an uncharacterized protein from Kluyveromyces lactis (strain ATCC 8585 / CBS 2359 / DSM 70799 / NBRC 1267 / NRRL Y-1140 / WM37) (Yeast).